The primary structure comprises 531 residues: Putative UDP-glucuronosyltransferase ugt-46 (531 aa).

An N-terminal signal peptide occupies residues 1–17 (MRLIFVLLATFVNAAFS). Asn-304 is a glycosylation site (N-linked (GlcNAc...) asparagine). The helical transmembrane segment at 493-513 (VIIPVFWLSISLVIPTIFGWY) threads the bilayer.

This sequence belongs to the UDP-glycosyltransferase family.

The protein localises to the membrane. It catalyses the reaction glucuronate acceptor + UDP-alpha-D-glucuronate = acceptor beta-D-glucuronoside + UDP + H(+). This chain is Putative UDP-glucuronosyltransferase ugt-46 (ugt-46), found in Caenorhabditis elegans.